The primary structure comprises 382 residues: MTGHATVWGVRISRVVPGRAVTGDEVRELLSGTGATVREAVRLAELTTLRVGGPAVLAECGTTEALVATVRALDAAGVPVLLLAGGSNLLVGDDGFDGVVVRVATSGVELGADGVLAEAGADWDAVVAATVAAGLGGLECLSGIPGSAGATPVQNVGAYGVEVAELLRRVRLLDRATGEIRWAGPGELGFGYRTSVLKHSDAAVVLAVEFALRPDGSSAPLRYRELAAALAADEGESRPAAAVREAVLRLRASKGMVLDPADHDTWSAGSFFTNPVVPADRIEQVRAAIHAHVGEVTIPTYPAADGVKLSAGWLIERAGFGKGWPGAEAPARLSTKHTLALTNRGTARAADVVALARTVRDGVAERFGIRLEPEPVTVGVRL.

The FAD-binding PCMH-type domain occupies 50-253 (RVGGPAVLAE…REAVLRLRAS (204 aa)). The active site involves Arg-193. Ser-270 (proton donor) is an active-site residue. The active site involves Glu-374.

Belongs to the MurB family. It depends on FAD as a cofactor.

It is found in the cytoplasm. It carries out the reaction UDP-N-acetyl-alpha-D-muramate + NADP(+) = UDP-N-acetyl-3-O-(1-carboxyvinyl)-alpha-D-glucosamine + NADPH + H(+). Its pathway is cell wall biogenesis; peptidoglycan biosynthesis. Its function is as follows. Cell wall formation. In Nocardia farcinica (strain IFM 10152), this protein is UDP-N-acetylenolpyruvoylglucosamine reductase.